The sequence spans 432 residues: Amino-acid acetyltransferase (432 aa).

Residues 286–425 enclose the N-acetyltransferase domain; it reads EQLREAGIED…ASLYNFQRNS (140 aa).

The protein belongs to the acetyltransferase family. ArgA subfamily.

Its subcellular location is the cytoplasm. It catalyses the reaction L-glutamate + acetyl-CoA = N-acetyl-L-glutamate + CoA + H(+). Its pathway is amino-acid biosynthesis; L-arginine biosynthesis; N(2)-acetyl-L-ornithine from L-glutamate: step 1/4. This is Amino-acid acetyltransferase from Pseudomonas paraeruginosa (strain DSM 24068 / PA7) (Pseudomonas aeruginosa (strain PA7)).